A 487-amino-acid chain; its full sequence is MERREVESFFERATSIRALVVGDLMLDEYLWGRAERISPEAPVQVVEVAREDLRLGGAGNVVNNLAALGCQVSVCSVIGSDENGALLRRALEEKGAGLEGLFEEGERRTSKKTRVLAANQQIVRIDRETKSSIAAASEQGIIDYLAARSGDFDVIVVSDYLKGVLTPAVLSAVCRSGRELGIPVVVDPKGNDYGKYRGATILTPNRKEAEIASGVAITDQESLQCAASGLLSCLELDALLITRSEAGMSLFPAAGGAVHIPTVAREVFDVTGAGDTVISVLSLGLACGLTMADAAWIANVAAGIAVGKLGTSTVAPQEIVAEVGHGAKDSDSKIKNLDVLAHAIAREHSRGKKVVFTNGCFDLLHVGHVKYLQKARGLGDILVVGLNTDASVRRLKGEKRPLIEETERAHILAALDCIDYVVLFDEDTPLKVIETLGPDILVKGGDYSIEGVVGREVVEARGGRVELIQFVDGRSTSRIIEKILSSY.

The tract at residues 1–326 (MERREVESFF…QEIVAEVGHG (326 aa)) is ribokinase. Residue 205-208 (NRKE) coordinates ATP. The active site involves aspartate 275. A cytidylyltransferase region spans residues 356–487 (FTNGCFDLLH…RIIEKILSSY (132 aa)).

The protein in the N-terminal section; belongs to the carbohydrate kinase PfkB family. In the C-terminal section; belongs to the cytidylyltransferase family. Homodimer.

The catalysed reaction is D-glycero-beta-D-manno-heptose 7-phosphate + ATP = D-glycero-beta-D-manno-heptose 1,7-bisphosphate + ADP + H(+). It catalyses the reaction D-glycero-beta-D-manno-heptose 1-phosphate + ATP + H(+) = ADP-D-glycero-beta-D-manno-heptose + diphosphate. The protein operates within nucleotide-sugar biosynthesis; ADP-L-glycero-beta-D-manno-heptose biosynthesis; ADP-L-glycero-beta-D-manno-heptose from D-glycero-beta-D-manno-heptose 7-phosphate: step 1/4. It participates in nucleotide-sugar biosynthesis; ADP-L-glycero-beta-D-manno-heptose biosynthesis; ADP-L-glycero-beta-D-manno-heptose from D-glycero-beta-D-manno-heptose 7-phosphate: step 3/4. Functionally, catalyzes the phosphorylation of D-glycero-D-manno-heptose 7-phosphate at the C-1 position to selectively form D-glycero-beta-D-manno-heptose-1,7-bisphosphate. Catalyzes the ADP transfer from ATP to D-glycero-beta-D-manno-heptose 1-phosphate, yielding ADP-D-glycero-beta-D-manno-heptose. In Citrifermentans bemidjiense (strain ATCC BAA-1014 / DSM 16622 / JCM 12645 / Bem) (Geobacter bemidjiensis), this protein is Bifunctional protein HldE.